Consider the following 358-residue polypeptide: UDP-N-acetylglucosamine--N-acetylmuramyl-(pentapeptide) pyrophosphoryl-undecaprenol N-acetylglucosamine transferase (358 aa).

UDP-N-acetyl-alpha-D-glucosamine is bound by residues 10 to 12 (TGG), N124, S196, and Q293.

Belongs to the glycosyltransferase 28 family. MurG subfamily.

Its subcellular location is the cell membrane. The catalysed reaction is di-trans,octa-cis-undecaprenyl diphospho-N-acetyl-alpha-D-muramoyl-L-alanyl-D-glutamyl-meso-2,6-diaminopimeloyl-D-alanyl-D-alanine + UDP-N-acetyl-alpha-D-glucosamine = di-trans,octa-cis-undecaprenyl diphospho-[N-acetyl-alpha-D-glucosaminyl-(1-&gt;4)]-N-acetyl-alpha-D-muramoyl-L-alanyl-D-glutamyl-meso-2,6-diaminopimeloyl-D-alanyl-D-alanine + UDP + H(+). It participates in cell wall biogenesis; peptidoglycan biosynthesis. Functionally, cell wall formation. Catalyzes the transfer of a GlcNAc subunit on undecaprenyl-pyrophosphoryl-MurNAc-pentapeptide (lipid intermediate I) to form undecaprenyl-pyrophosphoryl-MurNAc-(pentapeptide)GlcNAc (lipid intermediate II). In Exiguobacterium sp. (strain ATCC BAA-1283 / AT1b), this protein is UDP-N-acetylglucosamine--N-acetylmuramyl-(pentapeptide) pyrophosphoryl-undecaprenol N-acetylglucosamine transferase.